A 447-amino-acid chain; its full sequence is Probable tRNA methyltransferase 9B (447 aa).

Residue Ser-212 is modified to Phosphoserine. 2 disordered regions span residues 274 to 306 (AWANSTVSQQPSRHPSLDLHAPEPFSTKGPNLD) and 320 to 348 (WLRTPGTSDNFSGHKGGGSRRKEGGNFLD). Residues 276 to 286 (ANSTVSQQPSR) are compositionally biased toward polar residues.

This sequence belongs to the methyltransferase superfamily.

Its function is as follows. May modify wobble uridines in specific arginine and glutamic acid tRNAs. Acts as a tumor suppressor by promoting the expression of LIN9. This Mus musculus (Mouse) protein is Probable tRNA methyltransferase 9B (Trmt9b).